We begin with the raw amino-acid sequence, 529 residues long: Bifunctional purine biosynthesis protein PurH (529 aa).

The 148-residue stretch at 1 to 148 (MQQRRPVRRA…KNHKDVAIVV (148 aa)) folds into the MGS-like domain. Residue lysine 287 is modified to N6-acetyllysine.

This sequence belongs to the PurH family.

It catalyses the reaction (6R)-10-formyltetrahydrofolate + 5-amino-1-(5-phospho-beta-D-ribosyl)imidazole-4-carboxamide = 5-formamido-1-(5-phospho-D-ribosyl)imidazole-4-carboxamide + (6S)-5,6,7,8-tetrahydrofolate. The enzyme catalyses IMP + H2O = 5-formamido-1-(5-phospho-D-ribosyl)imidazole-4-carboxamide. It participates in purine metabolism; IMP biosynthesis via de novo pathway; 5-formamido-1-(5-phospho-D-ribosyl)imidazole-4-carboxamide from 5-amino-1-(5-phospho-D-ribosyl)imidazole-4-carboxamide (10-formyl THF route): step 1/1. Its pathway is purine metabolism; IMP biosynthesis via de novo pathway; IMP from 5-formamido-1-(5-phospho-D-ribosyl)imidazole-4-carboxamide: step 1/1. In Shigella dysenteriae serotype 1 (strain Sd197), this protein is Bifunctional purine biosynthesis protein PurH.